The sequence spans 285 residues: MTTQAYPMALVTQDSLDGYIRSVNSYPMLTADEERDLAERLHYKGEIEAAKGLILSHLRFVVHVARGYSGYGLPMADLVQEGNIGLMKAVKRFNPEVGVRLVSFAVHWIKAEIHEYVLRNWRIVKIATTKAQRKLFFNLRKSKKRLGWFNNGEVETVARELGVEPAEVREMESRLAAVDSTFDLPNEEDDSSSVSTAPVLYLEDKSSDVADNLEAQNWEAHTNNRLAMALASLDERSQHIVRSRWLDDDKATLQDLAEMYGVSAERIRQLEKNAMKKLKMAVGEI.

Residues L53–R122 are sigma-70 factor domain-2. The Interaction with polymerase core subunit RpoC signature appears at D77–Q80. Residues A229–M280 form a sigma-70 factor domain-4 region. Residues L253–K272 constitute a DNA-binding region (H-T-H motif).

It belongs to the sigma-70 factor family. RpoH subfamily. Interacts with the RNA polymerase core enzyme.

It localises to the cytoplasm. Its function is as follows. Sigma factors are initiation factors that promote the attachment of RNA polymerase to specific initiation sites and are then released. This sigma factor is involved in regulation of expression of heat shock genes. The sequence is that of RNA polymerase sigma factor RpoH from Vibrio vulnificus (strain CMCP6).